Reading from the N-terminus, the 336-residue chain is Holliday junction branch migration complex subunit RuvB (336 aa).

A large ATPase domain (RuvB-L) region spans residues 4 to 184; that stretch reads ADRLISAGTT…FGIVQRLEFY (181 aa). Residues Ile-23, Arg-24, Gly-65, Lys-68, Thr-69, Thr-70, 131-133, Arg-174, Tyr-184, and Arg-221 contribute to the ATP site; that span reads EDY. Thr-69 contributes to the Mg(2+) binding site. The interval 185 to 255 is small ATPAse domain (RuvB-S); sequence QVPDLQYIVS…IAAQALDMLN (71 aa). A head domain (RuvB-H) region spans residues 258–336; the sequence is AEGFDYMDRK…HFGITPPEMP (79 aa). The DNA site is built by Arg-294, Arg-313, and Arg-318.

The protein belongs to the RuvB family. As to quaternary structure, homohexamer. Forms an RuvA(8)-RuvB(12)-Holliday junction (HJ) complex. HJ DNA is sandwiched between 2 RuvA tetramers; dsDNA enters through RuvA and exits via RuvB. An RuvB hexamer assembles on each DNA strand where it exits the tetramer. Each RuvB hexamer is contacted by two RuvA subunits (via domain III) on 2 adjacent RuvB subunits; this complex drives branch migration. In the full resolvosome a probable DNA-RuvA(4)-RuvB(12)-RuvC(2) complex forms which resolves the HJ.

Its subcellular location is the cytoplasm. The enzyme catalyses ATP + H2O = ADP + phosphate + H(+). In terms of biological role, the RuvA-RuvB-RuvC complex processes Holliday junction (HJ) DNA during genetic recombination and DNA repair, while the RuvA-RuvB complex plays an important role in the rescue of blocked DNA replication forks via replication fork reversal (RFR). RuvA specifically binds to HJ cruciform DNA, conferring on it an open structure. The RuvB hexamer acts as an ATP-dependent pump, pulling dsDNA into and through the RuvAB complex. RuvB forms 2 homohexamers on either side of HJ DNA bound by 1 or 2 RuvA tetramers; 4 subunits per hexamer contact DNA at a time. Coordinated motions by a converter formed by DNA-disengaged RuvB subunits stimulates ATP hydrolysis and nucleotide exchange. Immobilization of the converter enables RuvB to convert the ATP-contained energy into a lever motion, pulling 2 nucleotides of DNA out of the RuvA tetramer per ATP hydrolyzed, thus driving DNA branch migration. The RuvB motors rotate together with the DNA substrate, which together with the progressing nucleotide cycle form the mechanistic basis for DNA recombination by continuous HJ branch migration. Branch migration allows RuvC to scan DNA until it finds its consensus sequence, where it cleaves and resolves cruciform DNA. This Shigella sonnei (strain Ss046) protein is Holliday junction branch migration complex subunit RuvB.